The primary structure comprises 234 residues: Small ribosomal subunit protein uS3 (234 aa).

The KH type-2 domain maps to 39–108 (IRKFVKKKLF…TVIVNVVEVK (70 aa)). Residues 212-234 (KGKNEETNNETADNSRGRRREAK) are disordered.

It belongs to the universal ribosomal protein uS3 family. As to quaternary structure, part of the 30S ribosomal subunit. Forms a tight complex with proteins S10 and S14.

Its function is as follows. Binds the lower part of the 30S subunit head. Binds mRNA in the 70S ribosome, positioning it for translation. This chain is Small ribosomal subunit protein uS3, found in Alkaliphilus metalliredigens (strain QYMF).